Consider the following 378-residue polypeptide: Ferredoxin--NADP reductase, root isozyme, chloroplastic (378 aa).

Over residues Met-1–Ser-17 the composition is skewed to low complexity. The interval Met-1–Gln-27 is disordered. A chloroplast-targeting transit peptide spans Met-1–Met-62. The FAD-binding FR-type domain maps to Lys-93–Leu-221. FAD is bound by residues Arg-153–Ser-156, Cys-174–Arg-176, Tyr-180, Val-195–Ser-197, and Thr-237. NADP(+)-binding residues include Ser-156 and Arg-176. Residues Thr-237, Val-269–Ala-270, Ser-299–Arg-300, Lys-309, Gly-337–Leu-338, and Glu-376 each bind NADP(+).

This sequence belongs to the ferredoxin--NADP reductase type 1 family. FAD is required as a cofactor.

It is found in the plastid. It localises to the chloroplast. The catalysed reaction is 2 reduced [2Fe-2S]-[ferredoxin] + NADP(+) + H(+) = 2 oxidized [2Fe-2S]-[ferredoxin] + NADPH. The protein operates within energy metabolism; photosynthesis. Its function is as follows. May play a key role in regulating the relative amounts of cyclic and non-cyclic electron flow to meet the demands of the plant for ATP and reducing power. Is involved in nitrate assimilation. This is Ferredoxin--NADP reductase, root isozyme, chloroplastic from Oryza sativa subsp. japonica (Rice).